The primary structure comprises 56 residues: Small ribosomal subunit protein uS14 (56 aa).

Zn(2+)-binding residues include Cys-21, Cys-24, Cys-39, and Cys-42.

This sequence belongs to the universal ribosomal protein uS14 family. It depends on Zn(2+) as a cofactor.

The sequence is that of Small ribosomal subunit protein uS14 (RPS29) from Debaryomyces hansenii (strain ATCC 36239 / CBS 767 / BCRC 21394 / JCM 1990 / NBRC 0083 / IGC 2968) (Yeast).